We begin with the raw amino-acid sequence, 199 residues long: FMN-dependent NADH:quinone oxidoreductase 4 (199 aa).

FMN contacts are provided by residues Ser-10, 95-98 (MYNL), and 139-142 (SRGG).

This sequence belongs to the azoreductase type 1 family. As to quaternary structure, homodimer. FMN serves as cofactor.

It catalyses the reaction 2 a quinone + NADH + H(+) = 2 a 1,4-benzosemiquinone + NAD(+). It carries out the reaction N,N-dimethyl-1,4-phenylenediamine + anthranilate + 2 NAD(+) = 2-(4-dimethylaminophenyl)diazenylbenzoate + 2 NADH + 2 H(+). Its function is as follows. Quinone reductase that provides resistance to thiol-specific stress caused by electrophilic quinones. In terms of biological role, also exhibits azoreductase activity. Catalyzes the reductive cleavage of the azo bond in aromatic azo compounds to the corresponding amines. The sequence is that of FMN-dependent NADH:quinone oxidoreductase 4 from Burkholderia lata (strain ATCC 17760 / DSM 23089 / LMG 22485 / NCIMB 9086 / R18194 / 383).